The following is a 407-amino-acid chain: Elongation factor Tu (407 aa).

The tr-type G domain occupies 10–217; it reads KPHVNVGTIG…TLDEYIPEPE (208 aa). The segment at 19 to 26 is G1; that stretch reads GHVDHGKT. 19-26 contributes to the GTP binding site; the sequence is GHVDHGKT. Thr26 contacts Mg(2+). The G2 stretch occupies residues 60 to 64; the sequence is GITIA. Residues 81-84 form a G3 region; that stretch reads DCPG. GTP contacts are provided by residues 81-85 and 136-139; these read DCPGH and NKAD. Residues 136–139 form a G4 region; that stretch reads NKAD. Residues 184 to 186 form a G5 region; the sequence is SAL.

Belongs to the TRAFAC class translation factor GTPase superfamily. Classic translation factor GTPase family. EF-Tu/EF-1A subfamily. In terms of assembly, monomer.

The protein resides in the cytoplasm. It catalyses the reaction GTP + H2O = GDP + phosphate + H(+). In terms of biological role, GTP hydrolase that promotes the GTP-dependent binding of aminoacyl-tRNA to the A-site of ribosomes during protein biosynthesis. The polypeptide is Elongation factor Tu (Teredinibacter turnerae (strain ATCC 39867 / T7901)).